The following is a 540-amino-acid chain: MSLRNRLSKSGENPEQDEAQKNFMDTYRNGHITMKQLIAKKRLLAAEAEELKPLFMKEVGCHFDDFVTNLIEKSASLDNGGCALTTFSILEEMKKNHRAKDLRAPPEQGKIFISRQSLLDELFEVDHIRTIYHMFIALLILFVLSTIVVDYIDEGRLVLEFNLLAYAFGKFPTVIWTWWAMFLSTLSIPYFLFQRWAHGYSKSSHPLIYSLVHGLLFLVFQLGVLGFVPTYVVLAYTLPPASRFILILEQIRLIMKAHSFVRENIPRVLNAAKEKSSKDPLPTVNQYLYFLFAPTLIYRDNYPRTPTVRWGYVAMQFLQVFGCLFYVYYIFERLCAPLFRNIKQEPFSARVLVLCVFNSILPGVLILFLSFFAFLHCWLNAFAEMLRFGDRMFYKDWWNSTSYSNYYRTWNVVVHDWLYYYVYKDLLWFFSKRFKSAAMLAVFALSAVVHEYALAICLSYFYPVLFVLFMFFGMAFNFIVNDSRKRPIWNIMVWASLFLGYGLILCFYSQEWYARQHCPLKNPTFLDYVRPRTWTCRYVF.

The tract at residues 1 to 20 is disordered; the sequence is MSLRNRLSKSGENPEQDEAQ. Over 1–128 the chain is Cytoplasmic; that stretch reads MSLRNRLSKS…LDELFEVDHI (128 aa). Position 2 is a phosphoserine (serine 2). Histidine 127 lines the cholesterol pocket. Residues 129 to 150 traverse the membrane as a helical segment; that stretch reads RTIYHMFIALLILFVLSTIVVD. Over 151-170 the chain is Lumenal; it reads YIDEGRLVLEFNLLAYAFGK. A helical transmembrane segment spans residues 171 to 196; that stretch reads FPTVIWTWWAMFLSTLSIPYFLFQRW. Over 197-208 the chain is Cytoplasmic; the sequence is AHGYSKSSHPLI. Residues 209-234 traverse the membrane as a helical segment; the sequence is YSLVHGLLFLVFQLGVLGFVPTYVVL. Over 235–242 the chain is Lumenal; that stretch reads AYTLPPAS. Residues 243–266 form a helical membrane-spanning segment; it reads RFILILEQIRLIMKAHSFVRENIP. Residues 267–309 lie on the Cytoplasmic side of the membrane; sequence RVLNAAKEKSSKDPLPTVNQYLYFLFAPTLIYRDNYPRTPTVR. The helical transmembrane segment at 310-342 threads the bilayer; the sequence is WGYVAMQFLQVFGCLFYVYYIFERLCAPLFRNI. At 343 to 359 the chain is on the lumenal side; sequence KQEPFSARVLVLCVFNS. A helical transmembrane segment spans residues 360–385; sequence ILPGVLILFLSFFAFLHCWLNAFAEM. The Cytoplasmic segment spans residues 386-433; sequence LRFGDRMFYKDWWNSTSYSNYYRTWNVVVHDWLYYYVYKDLLWFFSKR. The short motif at 393–399 is the FYXDWWN motif element; the sequence is FYKDWWN. 7 residues coordinate an acyl-CoA: asparagine 405, arginine 408, asparagine 411, histidine 415, tyrosine 423, lysine 435, and serine 446. A helical transmembrane segment spans residues 434–458; the sequence is FKSAAMLAVFALSAVVHEYALAICL. Histidine 450 is an active-site residue. Residues 459-464 are Lumenal-facing; the sequence is SYFYPV. Residues 465-480 form a helical membrane-spanning segment; that stretch reads LFVLFMFFGMAFNFIV. The Cytoplasmic portion of the chain corresponds to 481–486; the sequence is NDSRKR. Residues 487–518 form a helical membrane-spanning segment; that stretch reads PIWNIMVWASLFLGYGLILCFYSQEWYARQHC. An intrachain disulfide couples cysteine 518 to cysteine 536. The Lumenal portion of the chain corresponds to 519–540; that stretch reads PLKNPTFLDYVRPRTWTCRYVF.

This sequence belongs to the membrane-bound acyltransferase family. Sterol o-acyltransferase subfamily. May form homo- or heterodimers. Interacts with UBIAD1.

Its subcellular location is the endoplasmic reticulum membrane. The catalysed reaction is a sterol + a long-chain fatty acyl-CoA = a long-chain 3-hydroxysterol ester + CoA. It carries out the reaction cholesterol + an acyl-CoA = a cholesterol ester + CoA. The enzyme catalyses cholesterol + (9Z)-octadecenoyl-CoA = cholesteryl (9Z-octadecenoate) + CoA. It catalyses the reaction cholesterol + hexadecanoyl-CoA = cholesteryl hexadecanoate + CoA. The catalysed reaction is octadecanoyl-CoA + cholesterol = cholesteryl octadecanoate + CoA. It carries out the reaction (9Z,12Z)-octadecadienoyl-CoA + cholesterol = cholesteryl (9Z,12Z)-octadecadienoate + CoA. The enzyme catalyses (5Z,8Z,11Z,14Z)-eicosatetraenoyl-CoA + cholesterol = cholesteryl (5Z,8Z,11Z,14Z)-eicosatetraenoate + CoA. It catalyses the reaction (9Z)-hexadecenoyl-CoA + cholesterol = cholesteryl (9Z)-hexadecenoate + CoA. The catalysed reaction is (11Z)-octadecenoyl-CoA + cholesterol = cholesteryl (11Z)-octadecenoate + CoA. It carries out the reaction (7Z)-octadecenoyl-CoA + cholesterol = cholesteryl (7Z)-octadecenoate + CoA. Its function is as follows. Catalyzes the formation of fatty acid-cholesterol esters, which are less soluble in membranes than cholesterol. Plays a role in lipoprotein assembly and dietary cholesterol absorption. Preferentially utilizes oleoyl-CoA ((9Z)-octadecenoyl-CoA) as a substrate: shows a higher activity towards an acyl-CoA substrate with a double bond at the delta-9 position (9Z) than towards saturated acyl-CoA or an unsaturated acyl-CoA with a double bond at the delta-7 (7Z) or delta-11 (11Z) positions. This Mus musculus (Mouse) protein is Sterol O-acyltransferase 1.